A 331-amino-acid polypeptide reads, in one-letter code: MVKSVLASALFAVSALAASRTTAPSGAIVVAKSGGDYTTIGDAIDALSTSTTDTQTIFIEEGTYDEQVYLPAMTGKVIIYGQTENTDSYADNLVTITHAISYEDAGESDDLTATFRNKAVGSQVYNLNIANTCGQACHQALALSAWADQQGYYGCNFTGYQDTLLAQTGNQLYINSYIEGAVDFIFGQHARAWFQNVDIRVVEGPTSASITANGRSSETDTSYYVINKSTVAAKEGDDVAEGTYYLGRPWSEYARVVFQQTSMTNVINSLGWTEWSTSTPNTEYVTFGEYANTGAGSEGTRASFAEKLDAKLTITDILGSDYTSWVDTSYF.

Positions 1 to 17 (MVKSVLASALFAVSALA) are cleaved as a signal peptide. Residue Gln139 coordinates substrate. The Proton donor role is filled by Asp162. The Nucleophile role is filled by Asp183. 2 residues coordinate substrate: Arg248 and Trp250.

It belongs to the pectinesterase family.

Its subcellular location is the secreted. The enzyme catalyses [(1-&gt;4)-alpha-D-galacturonosyl methyl ester](n) + n H2O = [(1-&gt;4)-alpha-D-galacturonosyl](n) + n methanol + n H(+). It participates in glycan metabolism; pectin degradation; 2-dehydro-3-deoxy-D-gluconate from pectin: step 1/5. Its function is as follows. Involved in maceration and soft-rotting of plant tissue. The sequence is that of Pectinesterase (pme1) from Aspergillus aculeatus.